We begin with the raw amino-acid sequence, 1217 residues long: ATP-dependent helicase/nuclease subunit A (1217 aa).

Positions 10 to 475 constitute a UvrD-like helicase ATP-binding domain; that stretch reads VIWTDAQWQS…IDLSQNFRSR (466 aa). ATP is bound at residue 31 to 38; it reads AAAGSGKT. The UvrD-like helicase C-terminal domain occupies 476 to 786; it reads KEVLSTTNYI…RMMTIHSSKG (311 aa).

This sequence belongs to the helicase family. AddA subfamily. In terms of assembly, heterodimer of AddA and AddB/RexB. Mg(2+) is required as a cofactor.

It catalyses the reaction Couples ATP hydrolysis with the unwinding of duplex DNA by translocating in the 3'-5' direction.. It carries out the reaction ATP + H2O = ADP + phosphate + H(+). Its function is as follows. The heterodimer acts as both an ATP-dependent DNA helicase and an ATP-dependent, dual-direction single-stranded exonuclease. Recognizes the chi site generating a DNA molecule suitable for the initiation of homologous recombination. The AddA nuclease domain is required for chi fragment generation; this subunit has the helicase and 3' -&gt; 5' nuclease activities. This is ATP-dependent helicase/nuclease subunit A from Staphylococcus aureus (strain Mu3 / ATCC 700698).